The following is a 148-amino-acid chain: Ubiquitin conjugating enzyme E2 B (148 aa).

The UBC core domain maps to 2–148; sequence AAHKRLQKEI…AKEWTKKYAK (147 aa). The active-site Glycyl thioester intermediate is the Cys87.

It belongs to the ubiquitin-conjugating enzyme family. As to quaternary structure, interacts with mkkA (via F-box/WD40 repeat domains).

The enzyme catalyses S-ubiquitinyl-[E1 ubiquitin-activating enzyme]-L-cysteine + [E2 ubiquitin-conjugating enzyme]-L-cysteine = [E1 ubiquitin-activating enzyme]-L-cysteine + S-ubiquitinyl-[E2 ubiquitin-conjugating enzyme]-L-cysteine.. The protein operates within protein modification; protein ubiquitination. Functionally, involved in protein ubiquitination and degradation during development. Mediates protein ubiquitination at the mound and finger stage required for subsequent development and may be an essential component of the developmental transition between the induction of postaggregative gene expression and subsequent cell-type differentiation and morphogenesis. ubcB and ubpB differentially control ubiquitination/deubiquitination and degradation of mkkA protein in a cell-type-specific and temporally regulated manner. This Dictyostelium discoideum (Social amoeba) protein is Ubiquitin conjugating enzyme E2 B (ubcB).